The sequence spans 449 residues: Mannan endo-1,6-alpha-mannosidase DCW1 (449 aa).

Residues 1–21 (MLVNKVIGLLGVLFATRFTNA) form the signal peptide. N-linked (GlcNAc...) asparagine glycans are attached at residues Asn34, Asn84, Asn109, Asn133, Asn203, Asn225, Asn240, Asn265, Asn281, Asn337, Asn362, and Asn420. A lipid anchor (GPI-anchor amidated glycine) is attached at Gly428. A propeptide spans 429–449 (AGIITAVIGISIVACALWLVF) (removed in mature form).

It belongs to the glycosyl hydrolase 76 family.

The protein resides in the cell membrane. The catalysed reaction is Random hydrolysis of (1-&gt;6)-alpha-D-mannosidic linkages in unbranched (1-&gt;6)-mannans.. Required for normal synthesis of the cell wall. The sequence is that of Mannan endo-1,6-alpha-mannosidase DCW1 (DCW1) from Saccharomyces cerevisiae (strain ATCC 204508 / S288c) (Baker's yeast).